A 395-amino-acid chain; its full sequence is uncharacterized protein (395 aa).

8 helical membrane passes run 15–35 (ILAFSFFIAFLVVVSVLVTVF), 56–76 (WPWILLIVLGIVVTLAWNIII), 86–106 (FHAPWWEWVLFACVVQFFQIV), 131–151 (AVLLVTSTGAFWNLAQALITW), 175–195 (WFSFAGMIFDVVVAILFIFIA), 254–274 (LANILIAVVGYFSVFAVFAIV), 298–318 (IAITASNFIPVPSGEGATQFV), and 348–368 (VYIPAILFSLCFIGWVVQVVI).

It is found in the cell membrane. This is an uncharacterized protein from Mycoplasma pneumoniae (strain ATCC 29342 / M129 / Subtype 1) (Mycoplasmoides pneumoniae).